A 234-amino-acid chain; its full sequence is UPF0173 metal-dependent hydrolase Atu1317 (234 aa).

The protein belongs to the UPF0173 family.

The chain is UPF0173 metal-dependent hydrolase Atu1317 from Agrobacterium fabrum (strain C58 / ATCC 33970) (Agrobacterium tumefaciens (strain C58)).